The sequence spans 317 residues: tRNA dimethylallyltransferase (317 aa).

Residue 21-28 (GPTASGKS) coordinates ATP. 23-28 (TASGKS) is a binding site for substrate. The segment at 46 to 49 (DSMQ) is interaction with substrate tRNA.

Belongs to the IPP transferase family. Monomer. Mg(2+) serves as cofactor.

It carries out the reaction adenosine(37) in tRNA + dimethylallyl diphosphate = N(6)-dimethylallyladenosine(37) in tRNA + diphosphate. Functionally, catalyzes the transfer of a dimethylallyl group onto the adenine at position 37 in tRNAs that read codons beginning with uridine, leading to the formation of N6-(dimethylallyl)adenosine (i(6)A). The protein is tRNA dimethylallyltransferase of Nitrobacter hamburgensis (strain DSM 10229 / NCIMB 13809 / X14).